The chain runs to 871 residues: Alanine--tRNA ligase (871 aa).

Zn(2+)-binding residues include His-561, His-565, Cys-662, and His-666.

It belongs to the class-II aminoacyl-tRNA synthetase family. Zn(2+) serves as cofactor.

Its subcellular location is the cytoplasm. It carries out the reaction tRNA(Ala) + L-alanine + ATP = L-alanyl-tRNA(Ala) + AMP + diphosphate. Functionally, catalyzes the attachment of alanine to tRNA(Ala) in a two-step reaction: alanine is first activated by ATP to form Ala-AMP and then transferred to the acceptor end of tRNA(Ala). Also edits incorrectly charged Ser-tRNA(Ala) and Gly-tRNA(Ala) via its editing domain. The chain is Alanine--tRNA ligase from Dechloromonas aromatica (strain RCB).